The sequence spans 110 residues: UPF0122 protein GWCH70_1086 (110 aa).

This sequence belongs to the UPF0122 family.

Its function is as follows. Might take part in the signal recognition particle (SRP) pathway. This is inferred from the conservation of its genetic proximity to ftsY/ffh. May be a regulatory protein. The chain is UPF0122 protein GWCH70_1086 from Geobacillus sp. (strain WCH70).